We begin with the raw amino-acid sequence, 328 residues long: Tetraacyldisaccharide 4'-kinase (328 aa).

An ATP-binding site is contributed by 55–62; it reads TAGGNGKT.

This sequence belongs to the LpxK family.

It carries out the reaction a lipid A disaccharide + ATP = a lipid IVA + ADP + H(+). It functions in the pathway glycolipid biosynthesis; lipid IV(A) biosynthesis; lipid IV(A) from (3R)-3-hydroxytetradecanoyl-[acyl-carrier-protein] and UDP-N-acetyl-alpha-D-glucosamine: step 6/6. In terms of biological role, transfers the gamma-phosphate of ATP to the 4'-position of a tetraacyldisaccharide 1-phosphate intermediate (termed DS-1-P) to form tetraacyldisaccharide 1,4'-bis-phosphate (lipid IVA). This chain is Tetraacyldisaccharide 4'-kinase, found in Escherichia coli O17:K52:H18 (strain UMN026 / ExPEC).